An 897-amino-acid polypeptide reads, in one-letter code: F-BAR domain only protein 1 (897 aa).

Positions 1–276 are mediates membrane-binding; the sequence is MIHFFHTLQG…VGFEEYLSSL (276 aa). The 247-residue stretch at 2–248 folds into the F-BAR domain; that stretch reads IHFFHTLQGE…NVENIGIENL (247 aa). Residues 134-154 adopt a coiled-coil conformation; the sequence is LQKTREGYHSKCVELERLRKE. Residues 475–537 form a disordered region; it reads VEDSGLDSPS…PNPAPSSQSN (63 aa). Residues 501 to 520 show a composition bias toward polar residues; sequence PSSQSQSKDSINAASQSRGG. Residues 630 to 894 enclose the MHD domain; it reads SWPVAAAITE…RFATGKYMAG (265 aa).

It belongs to the FCHO family. As to quaternary structure, may oligomerize and form homotetramer. Interacts with acvr1l/alk8; linking this receptor to clathrin-mediated endocytosis.

It localises to the membrane. The protein resides in the clathrin-coated pit. Its function is as follows. May function in an early step of clathrin-mediated endocytosis. May regulate Bmp signaling by regulating clathrin-mediated endocytosis of Bmp receptors. The sequence is that of F-BAR domain only protein 1 (fcho1) from Danio rerio (Zebrafish).